Here is a 231-residue protein sequence, read N- to C-terminus: Chromosome partition protein MukE (231 aa).

A disordered region spans residues 204–231; that stretch reads TPEPSQQSLLENPTAEYDEEQTEWEDEA. Over residues 219–231 the composition is skewed to acidic residues; it reads EYDEEQTEWEDEA.

Belongs to the MukE family. Interacts, and probably forms a ternary complex, with MukF and MukB. The complex formation is stimulated by calcium or magnesium.

The protein localises to the cytoplasm. It is found in the nucleoid. Its function is as follows. Involved in chromosome condensation, segregation and cell cycle progression. May participate in facilitating chromosome segregation by condensation DNA from both sides of a centrally located replisome during cell division. Probably acts via its interaction with MukB and MukF. The polypeptide is Chromosome partition protein MukE (Vibrio cholerae serotype O1 (strain ATCC 39315 / El Tor Inaba N16961)).